We begin with the raw amino-acid sequence, 350 residues long: Galactokinase (350 aa).

14–17 contacts substrate; that stretch reads EHTD. ATP is bound by residues Ser-46 and 96-102; that span reads GAGLSSS. Mg(2+)-binding residues include Ser-102 and Glu-134. Asp-146 serves as the catalytic Proton acceptor. A substrate-binding site is contributed by Tyr-196.

Belongs to the GHMP kinase family. GalK subfamily.

The protein localises to the cytoplasm. It catalyses the reaction alpha-D-galactose + ATP = alpha-D-galactose 1-phosphate + ADP + H(+). Its pathway is carbohydrate metabolism; galactose metabolism. In terms of biological role, catalyzes the transfer of the gamma-phosphate of ATP to D-galactose to form alpha-D-galactose-1-phosphate (Gal-1-P). The sequence is that of Galactokinase from Thermotoga neapolitana.